The chain runs to 386 residues: Hemagglutinin-esterase (386 aa).

Residues 1 to 11 (MLIIFLFFYFC) form the signal peptide. The segment at 1 to 121 (MLIIFLFFYF…SNDVWLLNKV (121 aa)) is esterase domain 1. Over 12 to 359 (YGFNEPLNVV…PICVYDFLPI (348 aa)) the chain is Virion surface. Residue Ser-34 is the Nucleophile of the active site. An intrachain disulfide couples Cys-38 to Cys-59. N-linked (GlcNAc...) asparagine; by host glycosylation is found at Asn-83, Asn-110, Asn-145, and Asn-168. A disulfide bridge links Cys-107 with Cys-154. The interval 122–236 (RFYRALYSNM…GSYKVSTTAP (115 aa)) is receptor binding. 3 cysteine pairs are disulfide-bonded: Cys-180–Cys-246, Cys-188–Cys-219, and Cys-277–Cys-282. The esterase domain 2 stretch occupies residues 237–349 (FLSLPTKALC…RCPTSSIIKH (113 aa)). Asn-286 carries N-linked (GlcNAc...) asparagine; by host glycosylation. Catalysis depends on charge relay system residues Asp-296 and His-299. A disulfide bond links Cys-317 and Cys-341. N-linked (GlcNAc...) asparagine; by host glycosylation occurs at Asn-328. A helical membrane pass occupies residues 360–380 (ILQGILLCLALLFVVFLLFLL). Over 381-386 (YNDKSH) the chain is Intravirion.

This sequence belongs to the influenza type C/coronaviruses hemagglutinin-esterase family. As to quaternary structure, homodimer; disulfide-linked. Forms a complex with the M protein in the pre-Golgi. Associates then with S-M complex to form a ternary complex S-M-HE. N-glycosylated in the host RER.

It is found in the virion membrane. The protein localises to the host cell membrane. It catalyses the reaction N-acetyl-9-O-acetylneuraminate + H2O = N-acetylneuraminate + acetate + H(+). The catalysed reaction is N-acetyl-4-O-acetylneuraminate + H2O = N-acetylneuraminate + acetate + H(+). In terms of biological role, structural protein that makes short spikes at the surface of the virus. Contains receptor binding and receptor-destroying activities. Mediates de-O-acetylation of N-acetyl-4-O-acetylneuraminic acid, which is probably the receptor determinant recognized by the virus on the surface of erythrocytes and susceptible cells. This receptor-destroying activity is important for virus release as it probably helps preventing self-aggregation and ensures the efficient spread of the progeny virus from cell to cell. May serve as a secondary viral attachment protein for initiating infection, the spike protein being the major one. May become a target for both the humoral and the cellular branches of the immune system. The sequence is that of Hemagglutinin-esterase from Homo sapiens (Human).